The sequence spans 192 residues: Adenylate kinase (192 aa).

10–18 (GVPGVGGTT) lines the ATP pocket.

This sequence belongs to the archaeal adenylate kinase family. As to quaternary structure, monomer.

The protein resides in the cytoplasm. It carries out the reaction AMP + ATP = 2 ADP. The protein is Adenylate kinase (adkA) of Methanothermococcus thermolithotrophicus (Methanococcus thermolithotrophicus).